A 696-amino-acid chain; its full sequence is Methionine synthase reductase (696 aa).

In terms of domain architecture, Flavodoxin-like spans 4-147; sequence FLLLYATQRG…VVEPWIDGLW (144 aa). Residues 10 to 14 and 93 to 124 contribute to the FMN site; these read TQRGQ and LLGL…QRFY. A hinge region spans residues 166–245; that stretch reads TLSRASDAPL…SSLSIPAVPP (80 aa). Phosphoserine is present on residues S171 and S188. The 263-residue stretch at 269–531 folds into the FAD-binding FR-type domain; it reads DPSFQVPISK…PRATNAFHLP (263 aa). K289 provides a ligand contact to NADP(+). Residues 449-452 and 485-488 contribute to the FAD site; these read RPYS and GVCT. NADP(+) contacts are provided by residues 608–609, 622–624, and D657; these read SR and YVQ. W695 is a binding site for FAD.

Forms a multiprotein complex with MMACHC, MMADHC and MTR. The cofactor is FAD. It depends on FMN as a cofactor.

The protein resides in the cytoplasm. It catalyses the reaction 2 methylcob(III)alamin-[methionine synthase] + 2 S-adenosyl-L-homocysteine + NADP(+) + H(+) = 2 cob(II)alamin-[methionine synthase] + 2 S-adenosyl-L-methionine + NADPH. The catalysed reaction is 2 cob(II)alamin + A + 2 H2O + 2 H(+) = 2 aquacob(III)alamin + AH2. Key enzyme in methionine and folate homeostasis responsible for the reactivation of methionine synthase (MTR/MS) activity by catalyzing the reductive methylation of MTR-bound cob(II)alamin. Cobalamin (vitamin B12) forms a complex with MTR to serve as an intermediary in methyl transfer reactions that cycles between MTR-bound methylcob(III)alamin and MTR bound-cob(I)alamin forms, and occasional oxidative escape of the cob(I)alamin intermediate during the catalytic cycle leads to the inactive cob(II)alamin species. The processing of cobalamin in the cytosol occurs in a multiprotein complex composed of at least MMACHC, MMADHC, MTRR and MTR which may contribute to shuttle safely and efficiently cobalamin towards MTR in order to produce methionine. Also necessary for the utilization of methyl groups from the folate cycle, thereby affecting transgenerational epigenetic inheritance. Also acts as a molecular chaperone for methionine synthase by stabilizing apoMTR and incorporating methylcob(III)alamin into apoMTR to form the holoenzyme. Also serves as an aquacob(III)alamin reductase by reducing aquacob(III)alamin to cob(II)alamin; this reduction leads to stimulation of the conversion of apoMTR and aquacob(III)alamin to MTR holoenzyme. The sequence is that of Methionine synthase reductase from Mus musculus (Mouse).